Here is a 383-residue protein sequence, read N- to C-terminus: ATP phosphoribosyltransferase regulatory subunit (383 aa).

Belongs to the class-II aminoacyl-tRNA synthetase family. HisZ subfamily. In terms of assembly, heteromultimer composed of HisG and HisZ subunits.

It is found in the cytoplasm. It functions in the pathway amino-acid biosynthesis; L-histidine biosynthesis; L-histidine from 5-phospho-alpha-D-ribose 1-diphosphate: step 1/9. Its function is as follows. Required for the first step of histidine biosynthesis. May allow the feedback regulation of ATP phosphoribosyltransferase activity by histidine. The sequence is that of ATP phosphoribosyltransferase regulatory subunit from Janthinobacterium sp. (strain Marseille) (Minibacterium massiliensis).